A 699-amino-acid polypeptide reads, in one-letter code: eEF1A lysine and N-terminal methyltransferase (699 aa).

An N-acetylmethionine modification is found at M1. Residue S267 is modified to Phosphoserine. Residues 433 to 459 (VSHKAQKKRKKDRKKQRPADAEDLPAA) are disordered. The span at 436-448 (KAQKKRKKDRKKQ) shows a compositional bias: basic residues.

The protein belongs to the methyltransferase superfamily. Forms a tripartite complex containing GAB1, METTL13 and SPRY2. Within the complex interacts with GAB1 and SPRY2.

It is found in the cytoplasm. The protein resides in the nucleus. Its subcellular location is the mitochondrion. The enzyme catalyses L-lysyl-[protein] + S-adenosyl-L-methionine = N(6)-methyl-L-lysyl-[protein] + S-adenosyl-L-homocysteine + H(+). It carries out the reaction N(6)-methyl-L-lysyl-[protein] + S-adenosyl-L-methionine = N(6),N(6)-dimethyl-L-lysyl-[protein] + S-adenosyl-L-homocysteine + H(+). The catalysed reaction is N-terminal glycyl-L-lysyl-L-glutamyl-[protein] + 3 S-adenosyl-L-methionine = N-terminal N,N,N-trimethyl-glycyl-L-lysyl-L-glutamyl-[protein] + 3 S-adenosyl-L-homocysteine + 3 H(+). With respect to regulation, protein N-terminal methyltransferase activity is inhibited by GTP and GDP. Its function is as follows. Dual methyltransferase that catalyzes methylation of elongation factor 1-alpha (EEF1A1 and EEF1A2) at two different positions, and is therefore involved in the regulation of mRNA translation. Via its C-terminus, methylates EEF1A1 and EEF1A2 at the N-terminal residue 'Gly-2'. Via its N-terminus dimethylates EEF1A1 and EEF1A2 at residue 'Lys-55'. Has no activity towards core histones H2A, H2B, H3 and H4. The protein is eEF1A lysine and N-terminal methyltransferase of Homo sapiens (Human).